A 927-amino-acid polypeptide reads, in one-letter code: Calmodulin-binding transcription activator CBT (927 aa).

The segment at residues 26–152 (YEKLVAEAAA…YRQTAEENAM (127 aa)) is a DNA-binding region (CG-1). Residues 70–96 (LYDRKVVRNFRKDGHNWKKKKDGRTVQ) are necessary and sufficient for nuclear localization. Positions 72-79 (DRKVVRNF) match the Nuclear localization signal motif. An ANK repeat occupies 609-638 (SGWTALHWAAYHGRERMVATLLSAGANPSL). 2 consecutive IQ domains span residues 757 to 786 (EIVAAMKIQHAFRNYNRKKAMRAAARIQSH) and 799 to 828 (MRRQVIRIQAAYRGHQVRRQYRKVIWSVGI). The segment at 826 to 845 (VGIVEKAILRWRKKRKGLRG) is calmodulin-binding. The interval 830–851 (EKAILRWRKKRKGLRGIASGMP) is necessary and sufficient for nuclear localization. The IQ 3 domain occupies 882-911 (FNRSVVRVQALFRSYKAQQEYRRMKIAHEE).

This sequence belongs to the CAMTA family.

It localises to the nucleus. Its activity is regulated as follows. Transcriptional activation activity is strongly reduced by calmodulin. Transcription activator that binds calmodulin in a calcium-dependent manner in vitro. Binds to the DNA consensus sequence 5'-T[AC]CG[CT]GT[GT][GT][GT][GT]T[GT]CG-3'. This chain is Calmodulin-binding transcription activator CBT, found in Oryza sativa subsp. japonica (Rice).